We begin with the raw amino-acid sequence, 204 residues long: Somatotropin (204 aa).

The N-terminal stretch at 1–17 (MDRVVLMLSVLSLGVSS) is a signal peptide. Glutamine 18 carries the post-translational modification Pyrrolidone carboxylic acid. Zn(2+) is bound at residue histidine 36. A disulfide bridge connects residues cysteine 69 and cysteine 177. Glutamate 186 is a binding site for Zn(2+). Cysteine 194 and cysteine 202 are disulfide-bonded.

This sequence belongs to the somatotropin/prolactin family.

It localises to the secreted. In terms of biological role, growth hormone plays an important role in growth control and is involved in the regulation of several anabolic processes. Implicated as an osmoregulatory substance important for seawater adaptation. The protein is Somatotropin (gh) of Acanthopagrus butcheri (Australian black bream).